Reading from the N-terminus, the 435-residue chain is MKITLVNSRLDPAGVTIREQIQVLLADPEYQREGIDWEFLEIDGRLIHQERIDTGLNSDLLIFLSRHTSRRPVPVLTVHPTGNPGEALLGGEAGSFAPAAPGWMQAVLQNLVRLVPDGYQASYEVTHHGPTTLSTPSFFVEIGSTDHEWSDPVAGAAVAEAVLTAAPVDPISLIGFGGTHYAPRETAVALETRGAFGHILHSREIGGLTGSLLAKIATAAEAEAVYIDRKAIDRPALDHLYALLEETDLPVLGEKELHQIGSLSWQEYRSLRQIAGDAAPGAHLVIGTLPGGGTPVTATVPADLLAQAISADQGRVMTAIGRMPVVGLTGRGGLLLPIIITYERYRSQIIHDLITLCVKTIREEQHAVIDGDRLIIKKERFDPGLAASLGVPPGALFGMLKGGQAVRVGDQVIKPEMVRSCTVTAIHLRGLERYT.

It belongs to the DtdA deacylase family. Monomer. Zn(2+) serves as cofactor.

It catalyses the reaction a D-aminoacyl-tRNA + H2O = a tRNA + a D-alpha-amino acid + H(+). It carries out the reaction glycyl-tRNA(Ala) + H2O = tRNA(Ala) + glycine + H(+). D-aminoacyl-tRNA deacylase with broad substrate specificity. By recycling D-aminoacyl-tRNA to D-amino acids and free tRNA molecules, this enzyme counteracts the toxicity associated with the formation of D-aminoacyl-tRNA entities in vivo. The polypeptide is D-aminoacyl-tRNA deacylase (Methanosphaerula palustris (strain ATCC BAA-1556 / DSM 19958 / E1-9c)).